A 386-amino-acid chain; its full sequence is Cytotoxic granule associated RNA binding protein TIA1 (386 aa).

Met1 bears the N-acetylmethionine mark. 3 consecutive RRM domains span residues Lys7–Thr83, Phe106–Arg184, and Cys214–Glu286. Residues Met354–Gln386 are disordered. Residues Pro363–Ser376 show a composition bias toward polar residues.

In terms of assembly, homooligomer; homooligomerization is induced by Zn(2+). Interacts with FASTK; the interactions leads to its phosphorylation. Interacts (via RRM1 and the C-terminal glutamine-rich (Q) sequence) with SNRPC/U1-C (via N-terminus); thereby facilitating spliceosomal U1 snRNP recruitment to 5' splice sites. In terms of processing, phosphorylated by FASTK; phosphorylation occurs after FAS ligation in FAS-mediated apoptosis and before DNA fragmentation. As to expression, expressed in heart, small intestine, kidney, liver, lung, skeletal muscle, testes, pancreas, and ovary (at protein level).

It is found in the nucleus. The protein localises to the cytoplasm. It localises to the stress granule. Its function is as follows. RNA-binding protein involved in the regulation of alternative pre-RNA splicing and mRNA translation by binding to uridine-rich (U-rich) RNA sequences. Binds to U-rich sequences immediately downstream from a 5' splice sites in a uridine-rich small nuclear ribonucleoprotein (U snRNP)-dependent fashion, thereby modulating alternative pre-RNA splicing. Preferably binds to the U-rich IAS1 sequence in a U1 snRNP-dependent manner; this binding is optimal if a 5' splice site is adjacent to IAS1. Activates the use of heterologous 5' splice sites; the activation depends on the intron sequence downstream from the 5' splice site, with a preference for a downstream U-rich sequence. By interacting with SNRPC/U1-C, promotes recruitment and binding of spliceosomal U1 snRNP to 5' splice sites followed by U-rich sequences, thereby facilitating atypical 5' splice site recognition by U1 snRNP. Activates splicing of alternative exons with weak 5' splice sites followed by a U-rich stretch on its own pre-mRNA and on TIAR mRNA. Acts as a modulator of alternative splicing for the apoptotic FAS receptor, thereby promoting apoptosis. Binds to the 5' splice site region of FAS intron 5 to promote accumulation of transcripts that include exon 6 at the expense of transcripts in which exon 6 is skipped, thereby leading to the transcription of a membrane-bound apoptotic FAS receptor, which promotes apoptosis. Binds to a conserved AU-rich cis element in COL2A1 intron 2 and modulates alternative splicing of COL2A1 exon 2. Also binds to the equivalent AT-rich element in COL2A1 genomic DNA, and may thereby be involved in the regulation of transcription. Binds specifically to a polypyrimidine-rich controlling element (PCE) located between the weak 5' splice site and the intronic splicing silencer of CFTR mRNA to promote exon 9 inclusion, thereby antagonizing PTB1 and its role in exon skipping of CFTR exon 9. Involved in the repression of mRNA translation by binding to AU-rich elements (AREs) located in mRNA 3' untranslated regions (3' UTRs), including target ARE-bearing mRNAs encoding TNF and PTGS2. Also participates in the cellular response to environmental stress, by acting downstream of the stress-induced phosphorylation of EIF2S1/EIF2A to promote the recruitment of untranslated mRNAs to cytoplasmic stress granules (SGs), leading to stress-induced translational arrest. Formation and recruitment to SGs is regulated by Zn(2+). Possesses nucleolytic activity against cytotoxic lymphocyte target cells. Functionally, displays enhanced splicing regulatory activity compared with TIA isoform Long. This chain is Cytotoxic granule associated RNA binding protein TIA1 (TIA1), found in Homo sapiens (Human).